We begin with the raw amino-acid sequence, 316 residues long: MNTSITARELFDQQRDKLALRWVAGQKGEHREIQAGSNNARRPSLAGYLNVIYPNKVQILGTEELAWLDSLDARQRWETIEKIIQVQPLALAISKNQSCPEDLGAAADESNTPLWISPKRGHELLNHLSYHLARTLAPRVTLHGVFMEIYSIGVLITGEAGSGKSELALELLSRGHRLVADDAPEFTQIAPDVLDGTCPELLQDLLEVRGLGVLNVRDMFGDTAVKKNKYLRLIVHLTRPMTEPTPSGYERLTGDSGSRHVLDLDVPLITLPVMPGRNLAVLTEAATRLHILRTKGIDPAAMFIARHSNLLERRTP.

Residues His-143 and Lys-164 contribute to the active site. 158 to 165 (GEAGSGKS) provides a ligand contact to ATP. Ser-165 is a binding site for Mg(2+). The active-site Proton acceptor; for phosphorylation activity. Proton donor; for dephosphorylation activity is the Asp-182. Residues 206–215 (LEVRGLGVLN) are important for the catalytic mechanism of both phosphorylation and dephosphorylation. Mg(2+) is bound at residue Glu-207. Arg-251 is an active-site residue. Positions 272–277 (PVMPGR) are important for the catalytic mechanism of dephosphorylation.

Belongs to the HPrK/P family. Homohexamer. The cofactor is Mg(2+).

The catalysed reaction is [HPr protein]-L-serine + ATP = [HPr protein]-O-phospho-L-serine + ADP + H(+). It carries out the reaction [HPr protein]-O-phospho-L-serine + phosphate + H(+) = [HPr protein]-L-serine + diphosphate. Its function is as follows. Catalyzes the ATP- as well as the pyrophosphate-dependent phosphorylation of a specific serine residue in HPr, a phosphocarrier protein of the phosphoenolpyruvate-dependent sugar phosphotransferase system (PTS). HprK/P also catalyzes the pyrophosphate-producing, inorganic phosphate-dependent dephosphorylation (phosphorolysis) of seryl-phosphorylated HPr (P-Ser-HPr). This Xanthomonas oryzae pv. oryzae (strain MAFF 311018) protein is HPr kinase/phosphorylase.